Consider the following 129-residue polypeptide: LEM domain-containing protein 1 (129 aa).

In terms of domain architecture, LEM spans 1 to 45 (MVDVKCLSDYELHKHLMKLGFTPGPILPSTRKTYEKKLVQLLASP). A disordered region spans residues 45-129 (PPWKPPVMKR…RAPRTTSHGA (85 aa)). Basic and acidic residues predominate over residues 83–97 (SLKKTTLDATRDPRA).

The chain is LEM domain-containing protein 1 (Lemd1) from Mus musculus (Mouse).